The sequence spans 253 residues: Flagellar brake protein YcgR (253 aa).

Residues 120–239 enclose the PilZ domain; the sequence is QRRDFYRFAT…NEGLINRYVY (120 aa).

The protein belongs to the YcgR family. In terms of assembly, monomer. Interacts with the flagellar basal bodies.

It localises to the bacterial flagellum basal body. Acts as a flagellar brake, regulating swimming and swarming in a bis-(3'-5') cyclic diguanylic acid (c-di-GMP)-dependent manner. Binds 1 c-di-GMP dimer per subunit. Increasing levels of c-di-GMP lead to decreased motility. In Methylotenera mobilis (strain JLW8 / ATCC BAA-1282 / DSM 17540), this protein is Flagellar brake protein YcgR.